Reading from the N-terminus, the 307-residue chain is Myeloid-associated differentiation marker-like protein 2 (307 aa).

2 consecutive MARVEL domains span residues 17 to 154 (AVTS…ARPG) and 159 to 303 (YMAT…RIRF). A run of 7 helical transmembrane segments spans residues 53 to 73 (FCMA…ACEF), 90 to 110 (AFAM…PLYF), 129 to 149 (LAAS…VALT), 163 to 183 (VSGL…GALV), 198 to 218 (VAVY…SVMG), 232 to 252 (IVYT…WPVF), and 278 to 298 (LVVA…LAYS).

Belongs to the MAL family.

The protein resides in the membrane. This is Myeloid-associated differentiation marker-like protein 2 (Myadml2) from Mus musculus (Mouse).